The primary structure comprises 485 residues: Glutamyl-tRNA(Gln) amidotransferase subunit A (485 aa).

Catalysis depends on charge relay system residues lysine 79 and serine 154. The active-site Acyl-ester intermediate is serine 178.

Belongs to the amidase family. GatA subfamily. In terms of assembly, heterotrimer of A, B and C subunits.

It catalyses the reaction L-glutamyl-tRNA(Gln) + L-glutamine + ATP + H2O = L-glutaminyl-tRNA(Gln) + L-glutamate + ADP + phosphate + H(+). Its function is as follows. Allows the formation of correctly charged Gln-tRNA(Gln) through the transamidation of misacylated Glu-tRNA(Gln) in organisms which lack glutaminyl-tRNA synthetase. The reaction takes place in the presence of glutamine and ATP through an activated gamma-phospho-Glu-tRNA(Gln). This Desulforamulus reducens (strain ATCC BAA-1160 / DSM 100696 / MI-1) (Desulfotomaculum reducens) protein is Glutamyl-tRNA(Gln) amidotransferase subunit A.